A 518-amino-acid polypeptide reads, in one-letter code: Bifunctional purine biosynthesis protein PurH (518 aa).

The 144-residue stretch at 1–144 (MNRRAVLSVS…KNQERVSIVV (144 aa)) folds into the MGS-like domain.

The protein belongs to the PurH family.

The catalysed reaction is (6R)-10-formyltetrahydrofolate + 5-amino-1-(5-phospho-beta-D-ribosyl)imidazole-4-carboxamide = 5-formamido-1-(5-phospho-D-ribosyl)imidazole-4-carboxamide + (6S)-5,6,7,8-tetrahydrofolate. The enzyme catalyses IMP + H2O = 5-formamido-1-(5-phospho-D-ribosyl)imidazole-4-carboxamide. It participates in purine metabolism; IMP biosynthesis via de novo pathway; 5-formamido-1-(5-phospho-D-ribosyl)imidazole-4-carboxamide from 5-amino-1-(5-phospho-D-ribosyl)imidazole-4-carboxamide (10-formyl THF route): step 1/1. It functions in the pathway purine metabolism; IMP biosynthesis via de novo pathway; IMP from 5-formamido-1-(5-phospho-D-ribosyl)imidazole-4-carboxamide: step 1/1. In Desulfitobacterium hafniense (strain DSM 10664 / DCB-2), this protein is Bifunctional purine biosynthesis protein PurH.